A 382-amino-acid chain; its full sequence is uncharacterized protein (382 aa).

Transmembrane regions (helical) follow at residues 8 to 28 (VLLL…LNTL), 39 to 61 (PTWQ…TLLT), 75 to 95 (YLAS…VGFW), 102 to 122 (FIAG…LMCS), 131 to 151 (LLAA…LMIS), 157 to 177 (LMSV…PLLF), 204 to 224 (LGVN…GLMP), 236 to 256 (GIGF…WPIG), 265 to 284 (LLVL…AMLG), 289 to 311 (APAL…AWAC), 325 to 345 (ALLL…AMLM), and 349 to 369 (SDNL…LMLL).

The protein belongs to the major facilitator superfamily. YcaD (TC 2.A.1.26) family.

The protein localises to the cell inner membrane. This is an uncharacterized protein from Enterobacter sp. (strain 638).